Consider the following 478-residue polypeptide: 3-ketoacyl-CoA synthase 3 (478 aa).

Positions 1–25 (MDLLVMLLSLLVSYLIFKIWKRIDS) are cleaved as a signal peptide. In terms of domain architecture, FAE spans 26–313 (KRDQNCYILD…FMLCLLLKKL (288 aa)). Catalysis depends on residues C168, H247, H345, H349, H378, and N382.

The protein belongs to the thiolase-like superfamily. Chalcone/stilbene synthases family. Expressed in siliques, leaves, stems and seedlings.

The protein resides in the endoplasmic reticulum. It catalyses the reaction a very-long-chain acyl-CoA + malonyl-CoA + H(+) = a very-long-chain 3-oxoacyl-CoA + CO2 + CoA. It functions in the pathway lipid metabolism; fatty acid biosynthesis. This Arabidopsis thaliana (Mouse-ear cress) protein is 3-ketoacyl-CoA synthase 3.